The following is a 321-amino-acid chain: Endoglucanase 1 (321 aa).

Residues 1 to 27 (MSRKLRTLMAALCALPLAFAAAPPAHA) form the signal peptide. The active site involves aspartate 110. Cysteine 112 and cysteine 156 are oxidised to a cystine. Aspartate 149 functions as the Proton donor in the catalytic mechanism. Aspartate 295 (nucleophile) is an active-site residue.

It belongs to the glycosyl hydrolase 6 (cellulase B) family.

It catalyses the reaction Endohydrolysis of (1-&gt;4)-beta-D-glucosidic linkages in cellulose, lichenin and cereal beta-D-glucans.. In terms of biological role, implicated in the mechanism of induction exerted by cellobiose. This is Endoglucanase 1 (celA1) from Streptomyces halstedii.